A 441-amino-acid chain; its full sequence is Phenoloxidase-activating enzyme (441 aa).

An N-terminal signal peptide occupies residues 1–21; it reads MFLIWTFIVAVLAIQTKSVVA. Pyrrolidone carboxylic acid is present on Gln-22. 2 Clip domains span residues 23 to 76 and 77 to 127; these read SCRT…AVCC and PCNA…SICC. Disulfide bonds link Cys-24–Cys-75, Cys-34–Cys-65, Cys-40–Cys-76, Cys-78–Cys-126, Cys-88–Cys-117, Cys-94–Cys-127, Cys-164–Cys-305, and Cys-203–Cys-219. The Peptidase S1 domain occupies 174–440; that stretch reads IVGGAPASID…YLPWIQNTIE (267 aa). The Charge relay system role is filled by His-218. The Ca(2+) site is built by Glu-237, Asn-239, Asn-242, and Asp-246. An N-linked (GlcNAc...) asparagine glycan is attached at Asn-239. Asp-285 acts as the Charge relay system in catalysis. An N-linked (GlcNAc...) asparagine glycan is attached at Asn-334. 2 disulfides stabilise this stretch: Cys-356/Cys-377 and Cys-387/Cys-416. Ser-391 acts as the Charge relay system in catalysis.

It belongs to the peptidase S1 family. CLIP subfamily. In terms of assembly, in the active form, heterodimer of a light chain and a heavy chain; disulfide-linked. Proteolytically cleaved for activation. Cleavage produces a light chain and a catalytic heavy chain which remains covalently associated probably through an interchain disulfide bond. In terms of processing, glycosylated.

Stabilized by calcium. Inhibited by di-isopropyl phosphorofluoridate (DFP), phenylmethanesulfonylfluoride (PMSF), p-nitrophenyl-p'-guanidinobenzonate (p-NPGB), p-chloromercuribenzoate (PCMB), ethylenediaminetetraacetic acid (EDTA), urea and CI-13c. In terms of biological role, endopeptidase with selective post-Arg cleavage site. Activates prophenoloxidase. Has a probable role in the melanization process as part of the innate immune response. This is Phenoloxidase-activating enzyme from Bombyx mori (Silk moth).